The sequence spans 947 residues: Bromodomain testis-specific protein (947 aa).

The 107-residue stretch at Arg-27–Met-133 folds into the Bromo 1 domain. Asn-109 is a binding site for JQ1. Phosphoserine is present on Ser-187. The segment at Gln-202–Ser-228 is disordered. Positions Lys-209–Pro-220 match the Nuclear localization signal motif. The span at Thr-217–Ser-228 shows a compositional bias: polar residues. A Bromo 2 domain is found at Val-267–Ile-376. 4 disordered regions span residues Glu-395–Val-420, Pro-444–Asn-511, Asn-610–Glu-698, and Asn-882–Glu-924. Positions Asp-417–Asn-470 form a coiled coil. Over residues Lys-447–Glu-462 the composition is skewed to basic residues. The span at Asn-470–Lys-481 shows a compositional bias: basic and acidic residues. The segment covering Glu-482–Gln-494 has biased composition (basic residues). The region spanning Lys-500–Pro-582 is the NET domain. A coiled-coil region spans residues Lys-591 to Lys-621. Positions Leu-637–Ser-662 are enriched in low complexity. Basic and acidic residues-rich tracts occupy residues Thr-674–Asn-692 and Ser-885–Glu-924.

The protein belongs to the BET family. In terms of assembly, interacts with mRNA splicing machinery proteins SRSF2, DDX5, HNRNPK and TARDBP. Interacts with the acetylated N-terminus of histone H1, H2, H3 and H4. Interacts with P-TEFb components CDK9 and CCNT1/cyclin-T1. Interacts with SMARCE1. Interacts with the acetylated N-terminus of histone H1.4, H2A, H2B, H3 and H4. In terms of processing, ubiquitinated in a SPOP-dependent manner, leading to proteasomal degradation. As to expression, testis-specific. A 3-fold higher expression is seen in adult testis than in embryo testis. Expression seems to be correlated with histone H4 hyperacetylation during the haploid phase of spermatogenesis (spermiogenesis). No expression, or very low expression is seen in patients' testes with abnormal spermatogenesis. Expressed in cancers such as non-small cell lung cancer and squamous cell carcinomas of the head and neck as well as of esophagus, but not in melanoma or in cancers of the colon, breast, kidney and bladder.

Its subcellular location is the nucleus. Its function is as follows. Testis-specific chromatin protein that specifically binds histone H4 acetylated at 'Lys-5' and 'Lys-8' (H4K5ac and H4K8ac, respectively) and plays a key role in spermatogenesis. Required in late pachytene spermatocytes: plays a role in meiotic and post-meiotic cells by binding to acetylated histones at the promoter of specific meiotic and post-meiotic genes, facilitating their activation at the appropriate time. In the post-meiotic phase of spermatogenesis, binds to hyperacetylated histones and participates in their general removal from DNA. Also recognizes and binds a subset of butyrylated histones: able to bind histone H4 butyrylated at 'Lys-8' (H4K8ac), while it is not able to bind H4 butyrylated at 'Lys-5' (H4K5ac). Also acts as a component of the splicing machinery in pachytene spermatocytes and round spermatids and participates in 3'-UTR truncation of specific mRNAs in post-meiotic spermatids. Required for chromocenter organization, a structure comprised of peri-centromeric heterochromatin. The chain is Bromodomain testis-specific protein (BRDT) from Homo sapiens (Human).